Consider the following 365-residue polypeptide: Chorismate synthase (365 aa).

NADP(+)-binding residues include arginine 48 and arginine 54. FMN is bound by residues 125 to 127, 238 to 239, alanine 278, 293 to 297, and arginine 319; these read RSS, NA, and KPTSS.

Belongs to the chorismate synthase family. As to quaternary structure, homotetramer. Requires FMNH2 as cofactor.

The catalysed reaction is 5-O-(1-carboxyvinyl)-3-phosphoshikimate = chorismate + phosphate. Its pathway is metabolic intermediate biosynthesis; chorismate biosynthesis; chorismate from D-erythrose 4-phosphate and phosphoenolpyruvate: step 7/7. Functionally, catalyzes the anti-1,4-elimination of the C-3 phosphate and the C-6 proR hydrogen from 5-enolpyruvylshikimate-3-phosphate (EPSP) to yield chorismate, which is the branch point compound that serves as the starting substrate for the three terminal pathways of aromatic amino acid biosynthesis. This reaction introduces a second double bond into the aromatic ring system. This is Chorismate synthase from Pseudoalteromonas translucida (strain TAC 125).